Reading from the N-terminus, the 302-residue chain is tRNA dimethylallyltransferase 2 (302 aa).

Residue Gly-6–Thr-13 participates in ATP binding. Substrate is bound at residue Thr-8–Thr-13. 2 interaction with substrate tRNA regions span residues Asp-31–Gln-34 and Gln-154–Arg-158.

Belongs to the IPP transferase family. Monomer. It depends on Mg(2+) as a cofactor.

It catalyses the reaction adenosine(37) in tRNA + dimethylallyl diphosphate = N(6)-dimethylallyladenosine(37) in tRNA + diphosphate. Its function is as follows. Catalyzes the transfer of a dimethylallyl group onto the adenine at position 37 in tRNAs that read codons beginning with uridine, leading to the formation of N6-(dimethylallyl)adenosine (i(6)A). In Porphyromonas gingivalis (strain ATCC BAA-308 / W83), this protein is tRNA dimethylallyltransferase 2.